The chain runs to 102 residues: ATP-dependent Clp protease adapter protein ClpS (102 aa).

Belongs to the ClpS family. In terms of assembly, binds to the N-terminal domain of the chaperone ClpA.

Functionally, involved in the modulation of the specificity of the ClpAP-mediated ATP-dependent protein degradation. The chain is ATP-dependent Clp protease adapter protein ClpS from Shewanella loihica (strain ATCC BAA-1088 / PV-4).